The primary structure comprises 212 residues: SOSS complex subunit B1 (212 aa).

Residues 22 to 92 (IVLETGRVTK…TLYTGRGGDL (71 aa)) constitute a DNA-binding region (OB). Positions 110–212 (EPNPEYNTQQ…GKETRRSSKR (103 aa)) are disordered. Residues 114-130 (EYNTQQAPNKSVQNNDN) show a composition bias toward polar residues. Residue Thr117 is modified to Phosphothreonine; by ATM. Low complexity predominate over residues 131 to 148 (SPTAPQATTGPPAASPAS). A compositionally biased stretch (polar residues) spans 149–160 (ENQNGNGLSTQL). Over residues 166 to 178 (PHPSHTPSHPPST) the composition is skewed to low complexity.

The protein belongs to the SOSS-B family. SOSS-B1 subfamily. Component of the SOSS complex, composed of SOSS-B (SOSS-B1/NABP2 or SOSS-B2/NABP1), SOSS-A/INTS3 and SOSS-C/INIP. SOSS complexes containing SOSS-B1/NABP2 are more abundant than complexes containing SOSS-B2/NABP1. Directly interacts with ATM, SOSS-A/INTS3 and RAD51. Interacts with INTS7. In terms of processing, phosphorylated by ATM in response to DNA damage. Phosphorylation prevents degradation by the proteasome, hence stabilization of the protein and accumulation within cells. Ubiquitinated in a FBXL5-dependent manner, leading to proteasomal degradation.

It is found in the nucleus. Component of the SOSS complex, a multiprotein complex that functions downstream of the MRN complex to promote DNA repair and G2/M checkpoint. In the SOSS complex, acts as a sensor of single-stranded DNA that binds to single-stranded DNA, in particular to polypyrimidines. The SOSS complex associates with DNA lesions and influences diverse endpoints in the cellular DNA damage response including cell-cycle checkpoint activation, recombinational repair and maintenance of genomic stability. Required for efficient homologous recombination-dependent repair of double-strand breaks (DSBs) and ATM-dependent signaling pathways. The chain is SOSS complex subunit B1 (Nabp2) from Mus musculus (Mouse).